Here is a 139-residue protein sequence, read N- to C-terminus: Ribonuclease homolog (139 aa).

The signal sequence occupies residues 1–23; it reads MAMSSLWWTAILLLALTVSMCYG. Residue H34 is the Proton acceptor of the active site. Disulfide bonds link C49–C102, C64–C111, and C82–C126. 65–69 is a binding site for substrate; the sequence is KSFNT. H133 acts as the Proton donor in catalysis.

Belongs to the pancreatic ribonuclease family.

Its subcellular location is the secreted. This chain is Ribonuclease homolog, found in Gallus gallus (Chicken).